The primary structure comprises 460 residues: UDP-N-acetylmuramate--L-alanine ligase (460 aa).

ATP is bound at residue 118–124 (GTHGKTT).

Belongs to the MurCDEF family.

It is found in the cytoplasm. The enzyme catalyses UDP-N-acetyl-alpha-D-muramate + L-alanine + ATP = UDP-N-acetyl-alpha-D-muramoyl-L-alanine + ADP + phosphate + H(+). It participates in cell wall biogenesis; peptidoglycan biosynthesis. Functionally, cell wall formation. This chain is UDP-N-acetylmuramate--L-alanine ligase, found in Gloeobacter violaceus (strain ATCC 29082 / PCC 7421).